A 507-amino-acid chain; its full sequence is MEQFKIDLNLGRSQQHDFIYPLIFQEYIYALAHDRGLNRSIFLENAGYDNKFSLLIVKRLITHLITQMYQQNHFLFSVNDSNQKKILGYNTNLYSQMIFEGFAVVVEIPFYLRLLSFLEGKERMKSHNLRSIHSIFPFLEDKFAFLNYVLDIQIPHPIHLEILIQTLRYWVKDASSLHLLRFFLHEYPIWNSFLIRKKSSFSFSKRNQRFFFFLYNFHVCEYESIFVFLRNQSSHLRSISYETFLERISFYRKIELEEVFTKDFKAILWVFKEPFLHYVRYRGNALLASKGTSLLMNKWKHYIVNFWQCYFYIWSQPRRIDINQLSNHSLDFLGYLSSVRLKHLMVRSQMIENSFLIENASKKFDTLMPITPMIGSLSKAKFCNVLGHPMSKPAWSALSDSDIIERFGCIYRNLSHYYSGSLKKRNLYRIKYILRLSCARTLARKHKSTVRLFLKRLGMGLLEEFFTGEEQVFYLTLPKASSTSGELYRRRVWYLDIICINHISNYE.

The protein belongs to the intron maturase 2 family. MatK subfamily.

Its subcellular location is the plastid. It is found in the chloroplast. In terms of biological role, usually encoded in the trnK tRNA gene intron. Probably assists in splicing its own and other chloroplast group II introns. This is Maturase K from Kalmia buxifolia (Sand myrtle).